The following is a 66-amino-acid chain: Regulator of G-protein signaling 11 (66 aa).

Residues 1–66 form the RGS domain; it reads EACEELRFGG…DAAQLHIYML (66 aa).

Heterodimer with Gbeta5. Interacts with RGS7BP, leading to regulate the subcellular location of the heterodimer formed with Gbeta5.

Inhibits signal transduction by increasing the GTPase activity of G protein alpha subunits thereby driving them into their inactive GDP-bound form. The chain is Regulator of G-protein signaling 11 (Rgs11) from Rattus norvegicus (Rat).